Here is a 277-residue protein sequence, read N- to C-terminus: Raffinose operon transcriptional regulatory protein RafR (277 aa).

One can recognise an HTH araC/xylS-type domain in the interval 176-274 (NLAVSYLQEN…GASPSYYRKS (99 aa)). 2 DNA-binding regions (H-T-H motif) span residues 193-214 (MDLC…KTHA) and 241-264 (VQSI…KRYS).

Involved in the regulation of the raffinose-operon. The sequence is that of Raffinose operon transcriptional regulatory protein RafR (rafR) from Pediococcus pentosaceus.